A 376-amino-acid polypeptide reads, in one-letter code: MHTILLVVFMIILGAIIGGVTNMIAIKMLFHPFKPYYIFRFRIPFTPGLIPKRREEIARKIGQVIEEHLITEELIRQKLNQPQSRNMIQQLIHKQISKLKNDDVTIKKIAGFLGIDVNELVDYKLTTKFLNKLNFWYESNKYRKLSEILPQSFLDQCKGQIEYITDFLCERARNYLSSEKGERDIYEMLDTFFNEKGRIIGLLQMFMTKESIADRIQHELIRLTQHPQSQKIITKVLNDEYEIFKDKNLDEIIKEQQFKNYSQLVLNELKTYLNLKDKTERPIKQVVPQFIQFLEDDTSKRMTDFIIKGTSKHLTNIMKKINLRQLVEEQINTFDLKYIENLIIDIANKELKLIMTLGFILGGIIGFFQGVIAIFV.

2 helical membrane-spanning segments follow: residues 4–24 and 356–376; these read ILLVVFMIILGAIIGGVTNMI and TLGFILGGIIGFFQGVIAIFV.

The protein belongs to the UPF0754 family.

It localises to the cell membrane. The protein is UPF0754 membrane protein SE_1527 of Staphylococcus epidermidis (strain ATCC 12228 / FDA PCI 1200).